The following is a 532-amino-acid chain: Maternal protein exuperantia (532 aa).

Disordered stretches follow at residues 206–251 (CSAS…NAVQ) and 403–491 (TVKP…NGLK). Low complexity-rich tracts occupy residues 220 to 231 (GSSMVSDSVSIS) and 404 to 417 (VKPV…NNNN). The span at 454-467 (SVSSLPDSTTKTPS) shows a compositional bias: polar residues. Serine 467 is subject to Phosphoserine.

Component of the osk RNP complex, which is composed of at least exuperantia (exu), ypsilon schachtel (yps), aret (bruno), cup, and the mRNA of osk. In the sponge body, forms a ribonucleoprotein complex (RNP) containing at least me31B, exu, yps and the mRNA of osk; interactions with exu and yps are RNA dependent.

The protein localises to the cytoplasm. The protein resides in the cytoplasmic ribonucleoprotein granule. In terms of biological role, ensures the proper localization of the mRNA of the bicoid gene to the anterior regions of the oocyte thus playing a fundamental role in the establishment of the polarity of the oocyte. May bind the bcd mRNA. This is Maternal protein exuperantia (exu) from Drosophila melanogaster (Fruit fly).